A 34-amino-acid chain; its full sequence is Photosystem I reaction center subunit XII (34 aa).

The chain crosses the membrane as a helical span at residues 9 to 29; the sequence is LIALSLIVVVHAGVLALRLGI.

This sequence belongs to the PsaM family.

It localises to the cellular thylakoid membrane. This chain is Photosystem I reaction center subunit XII, found in Prochlorococcus marinus (strain MIT 9312).